A 60-amino-acid chain; its full sequence is Large ribosomal subunit protein bL32 (60 aa).

Residues 1–60 (MAVQQNKKSRSARDMRRSHDALSENALSVEKTTGEVHLRHHVSPEGVYRGRKVVDKGADE) form a disordered region. Residues 11-22 (SARDMRRSHDAL) show a composition bias toward basic and acidic residues.

This sequence belongs to the bacterial ribosomal protein bL32 family.

In Pseudomonas putida (strain ATCC 700007 / DSM 6899 / JCM 31910 / BCRC 17059 / LMG 24140 / F1), this protein is Large ribosomal subunit protein bL32.